Consider the following 88-residue polypeptide: Putative transposase InsN for insertion sequence element IS911B (88 aa).

The protein belongs to the transposase 8 family.

In terms of biological role, involved in the transposition of the insertion sequence IS911. The sequence is that of Putative transposase InsN for insertion sequence element IS911B (insN2) from Escherichia coli (strain K12).